The chain runs to 374 residues: uncharacterized protein (374 aa).

Residues 1 to 13 (METKYHEYDDVQT) show a composition bias toward basic and acidic residues. Disordered stretches follow at residues 1–20 (METK…PSNK), 91–193 (SPMT…PLNQ), and 236–374 (KINN…SDFE). Positions 95–155 (NNNNNNNNNN…NNSSNNNNNN (61 aa)) are enriched in low complexity. Polar residues predominate over residues 166-193 (ISSNQSSPLSIYSTPPNPSSYVSSPLNQ). The span at 242–262 (APPPPPKACAPPPPPPPPPPI) shows a compositional bias: pro residues. Residues 277–300 (NNNNNNNNNNNSSNTNDSNNTNNT) are compositionally biased toward low complexity.

This is an uncharacterized protein from Dictyostelium discoideum (Social amoeba).